The following is an 801-amino-acid chain: Triacylglycerol lipase SDP1L (801 aa).

A glycan (N-linked (GlcNAc...) asparagine) is linked at Asn-130. 2 consecutive transmembrane segments (helical) span residues 232–249 (ALLLSGGASLGAFHLGVV) and 261–277 (IIAGSSVGSVMCAVVGT). The 204-residue stretch at 233-436 (LLLSGGASLG…EMDLPMIQLK (204 aa)) folds into the PNPLA domain. The GXSXG motif lies at 264-268 (GSSVG). Catalysis depends on Ser-266, which acts as the Nucleophile. Residues Asn-328 and Asn-332 are each glycosylated (N-linked (GlcNAc...) asparagine). Catalysis depends on Asp-423, which acts as the Proton acceptor. Asn-605, Asn-620, Asn-649, Asn-653, Asn-708, and Asn-759 each carry an N-linked (GlcNAc...) asparagine glycan. Residues 648–675 (SNRTSNLSHTYDAGSECDSPEAEDWTRS) form a disordered region. The interval 750–801 (MNSEPEDSQNESEIPETPESVQLDSPEKDIIDGESSASEDGDAQANLIHDHE) is disordered. Residues 753 to 765 (EPEDSQNESEIPE) are compositionally biased toward acidic residues.

Highly expressed in mature pollen.

It localises to the lipid droplet. Its subcellular location is the membrane. It catalyses the reaction a triacylglycerol + H2O = a diacylglycerol + a fatty acid + H(+). Functionally, may be involved in the release of fatty acids from the oil body in germinating seedlings. Can hydrolyze triacylglycerols in vitro. The sequence is that of Triacylglycerol lipase SDP1L from Arabidopsis thaliana (Mouse-ear cress).